The chain runs to 1616 residues: Myosin-IIIa (1616 aa).

Residues Trp-21 to Ile-287 enclose the Protein kinase domain. ATP-binding positions include Ile-27 to Val-35 and Lys-50. The active-site Proton acceptor is the Asp-150. Positions Lys-338–Lys-1053 constitute a Myosin motor domain. Residues Leu-934–Ser-956 form an actin-binding region. 3 consecutive IQ domains span residues Ala-1055–Glu-1084, Arg-1082–Thr-1111, and Glu-1346–Lys-1375. Residues Glu-1401–Ser-1479 are interaction with MORN4. Disordered stretches follow at residues Leu-1545 to Leu-1567 and Ala-1581 to Ser-1616. 2 stretches are compositionally biased toward basic and acidic residues: residues Gly-1550–Gln-1564 and Ser-1583–Pro-1592. Over residues Leu-1602–Ser-1616 the composition is skewed to basic residues.

It in the C-terminal section; belongs to the TRAFAC class myosin-kinesin ATPase superfamily. Myosin family. In the N-terminal section; belongs to the protein kinase superfamily. STE Ser/Thr protein kinase family. Interacts with MORN4. Interacts (via C-terminus) with ESPN and ESPNL. As to expression, strongest expression in retina, retinal pigment epithelial cells, cochlea and pancreas.

Its subcellular location is the cytoplasm. It localises to the cytoskeleton. The protein resides in the cell projection. It is found in the filopodium tip. The protein localises to the stereocilium. The enzyme catalyses L-seryl-[protein] + ATP = O-phospho-L-seryl-[protein] + ADP + H(+). It catalyses the reaction L-threonyl-[protein] + ATP = O-phospho-L-threonyl-[protein] + ADP + H(+). The catalysed reaction is ATP + H2O = ADP + phosphate + H(+). In terms of biological role, actin-dependent motor protein with a protein kinase activity, playing an essential role in hearing. Probably also plays a role in vision. Required for normal cochlear hair bundle development and hearing. Plays an important role in the early steps of cochlear hair bundle morphogenesis. Influences the number and lengths of stereocilia to be produced and limits the growth of microvilli within the forming auditory hair bundles thereby contributing to the architecture of the hair bundle, including its staircase pattern. Involved in the elongation of actin in stereocilia tips by transporting the actin regulatory factor ESPN to the plus ends of actin filaments. The polypeptide is Myosin-IIIa (MYO3A) (Homo sapiens (Human)).